The primary structure comprises 496 residues: NADP-dependent glyceraldehyde-3-phosphate dehydrogenase (496 aa).

Residues Arg-116 and 169-170 each bind substrate; that span reads NY. NADP(+) contacts are provided by Lys-192, Thr-195, and Asp-230. Position 245–249 (245–249) interacts with NAD(+); the sequence is GGDTG. Catalysis depends on Glu-264, which acts as the Proton acceptor. 297–299 is a substrate binding site; sequence RCT. Cys-298 (nucleophile) is an active-site residue. Glu-391 contributes to the NADP(+) binding site. Ser-404 carries the phosphoserine modification. Residue Arg-451 participates in substrate binding.

Belongs to the aldehyde dehydrogenase family. Interacts with 14-3-3 protein when phosphorylated. This interaction is released by divalent cations. Post-translationally, phosphorylated in shoots and non-photosynthetic tissues, but not in leaves.

Its subcellular location is the cytoplasm. The catalysed reaction is D-glyceraldehyde 3-phosphate + NADP(+) + H2O = (2R)-3-phosphoglycerate + NADPH + 2 H(+). With respect to regulation, insensitive to magnesium or calcium when dephosphorylated. When phosphorylated, 3-fold activation by magnesium or calcium, 2-fold activation by potassium, inhibited by ADP and AMP and insensitive to ATP or PPi. Functionally, important as a means of generating NADPH for biosynthetic reactions. This chain is NADP-dependent glyceraldehyde-3-phosphate dehydrogenase (GAPN), found in Triticum aestivum (Wheat).